The following is a 59-amino-acid chain: Large ribosomal subunit protein uL30 (59 aa).

It belongs to the universal ribosomal protein uL30 family. Part of the 50S ribosomal subunit.

This Solibacter usitatus (strain Ellin6076) protein is Large ribosomal subunit protein uL30.